The primary structure comprises 476 residues: Growth/differentiation factor 10 (476 aa).

An N-terminal signal peptide occupies residues Met-1 to Cys-29. A propeptide spanning residues Gly-30–Arg-366 is cleaved from the precursor. Residues Asn-114, Asn-152, and Asn-277 are each glycosylated (N-linked (GlcNAc...) asparagine). Disordered stretches follow at residues Gly-268–Arg-305 and Pro-330–Lys-358. 3 disulfides stabilise this stretch: Cys-374–Cys-441, Cys-403–Cys-473, and Cys-407–Cys-475. Residue Asn-467 is glycosylated (N-linked (GlcNAc...) asparagine).

It belongs to the TGF-beta family. As to quaternary structure, homodimer or heterodimer. Can form a non-covalent complex of the mature region and the pro-region. Costa, costicartilage, femur, calvaria, trachea, aorta and brain. Predominantly in the cerebellum.

The protein localises to the secreted. Its function is as follows. Growth factor involved in osteogenesis and adipogenesis. Plays an inhibitory role in the process of osteoblast differentiation via SMAD2/3 pathway. Plays an inhibitory role in the process of adipogenesis. In Rattus norvegicus (Rat), this protein is Growth/differentiation factor 10.